Consider the following 205-residue polypeptide: Inactive ribonuclease-like protein 9 (205 aa).

Positions 1 to 26 (MMRTLITIHPLPLLLLLQQLLQPVQF) are cleaved as a signal peptide. 3 cysteine pairs are disulfide-bonded: cysteine 98–cysteine 153, cysteine 116–cysteine 168, and cysteine 123–cysteine 130. 2 N-linked (GlcNAc...) asparagine glycosylation sites follow: asparagine 131 and asparagine 143.

The protein belongs to the pancreatic ribonuclease family.

The protein localises to the secreted. Its function is as follows. Does not exhibit any ribonuclease activity. The polypeptide is Inactive ribonuclease-like protein 9 (RNASE9) (Gorilla gorilla gorilla (Western lowland gorilla)).